A 580-amino-acid chain; its full sequence is Proline--tRNA ligase (580 aa).

The protein belongs to the class-II aminoacyl-tRNA synthetase family. ProS type 1 subfamily. In terms of assembly, homodimer.

Its subcellular location is the cytoplasm. The enzyme catalyses tRNA(Pro) + L-proline + ATP = L-prolyl-tRNA(Pro) + AMP + diphosphate. Its function is as follows. Catalyzes the attachment of proline to tRNA(Pro) in a two-step reaction: proline is first activated by ATP to form Pro-AMP and then transferred to the acceptor end of tRNA(Pro). As ProRS can inadvertently accommodate and process non-cognate amino acids such as alanine and cysteine, to avoid such errors it has two additional distinct editing activities against alanine. One activity is designated as 'pretransfer' editing and involves the tRNA(Pro)-independent hydrolysis of activated Ala-AMP. The other activity is designated 'posttransfer' editing and involves deacylation of mischarged Ala-tRNA(Pro). The misacylated Cys-tRNA(Pro) is not edited by ProRS. This Mycobacteroides abscessus (strain ATCC 19977 / DSM 44196 / CCUG 20993 / CIP 104536 / JCM 13569 / NCTC 13031 / TMC 1543 / L948) (Mycobacterium abscessus) protein is Proline--tRNA ligase.